The chain runs to 70 residues: Large ribosomal subunit protein bL31 (70 aa).

Cys16, Cys18, Cys37, and Cys40 together coordinate Zn(2+).

It belongs to the bacterial ribosomal protein bL31 family. Type A subfamily. Part of the 50S ribosomal subunit. Requires Zn(2+) as cofactor.

Its function is as follows. Binds the 23S rRNA. This Psychromonas ingrahamii (strain DSM 17664 / CCUG 51855 / 37) protein is Large ribosomal subunit protein bL31.